The following is a 194-amino-acid chain: Adenylate kinase (194 aa).

10–15 is an ATP binding site; that stretch reads GAGKGT. Residues 30-59 form an NMP region; it reads STGDMLRAAVAQQSEIGKRAKAVMDAGQLV. AMP-binding positions include Thr-31, Arg-36, 57–59, 85–88, and Gln-92; these read QLV and GYPR. An LID region spans residues 126-142; that stretch reads SRVAETIAKGAQVRSDD. Arg-127 contributes to the ATP binding site. Residues Arg-139 and Arg-150 each coordinate AMP. Ala-178 provides a ligand contact to ATP.

The protein belongs to the adenylate kinase family. Monomer.

The protein localises to the cytoplasm. The catalysed reaction is AMP + ATP = 2 ADP. It participates in purine metabolism; AMP biosynthesis via salvage pathway; AMP from ADP: step 1/1. In terms of biological role, catalyzes the reversible transfer of the terminal phosphate group between ATP and AMP. Plays an important role in cellular energy homeostasis and in adenine nucleotide metabolism. The polypeptide is Adenylate kinase (Brucella melitensis biotype 1 (strain ATCC 23456 / CCUG 17765 / NCTC 10094 / 16M)).